Consider the following 28-residue polypeptide: Short cationic peptide-1c (28 aa).

Glu-28 carries the glutamic acid 1-amide modification.

Expressed by the venom gland.

Its subcellular location is the secreted. The polypeptide is Short cationic peptide-1c (Cupiennius salei (American wandering spider)).